Reading from the N-terminus, the 368-residue chain is Ferredoxin--NADP reductase 2 (368 aa).

Residues aspartate 57, glutamine 65, tyrosine 70, valine 110, phenylalanine 145, aspartate 310, and threonine 351 each contribute to the FAD site.

It belongs to the ferredoxin--NADP reductase type 2 family. As to quaternary structure, homodimer. FAD is required as a cofactor.

It catalyses the reaction 2 reduced [2Fe-2S]-[ferredoxin] + NADP(+) + H(+) = 2 oxidized [2Fe-2S]-[ferredoxin] + NADPH. In Cupriavidus pinatubonensis (strain JMP 134 / LMG 1197) (Cupriavidus necator (strain JMP 134)), this protein is Ferredoxin--NADP reductase 2.